A 234-amino-acid polypeptide reads, in one-letter code: Triosephosphate isomerase (234 aa).

8-10 (NFK) serves as a coordination point for substrate. Residue His-90 is the Electrophile of the active site. Glu-159 serves as the catalytic Proton acceptor. Substrate-binding residues include Gly-165 and Ser-197.

Belongs to the triosephosphate isomerase family. In terms of assembly, homodimer.

It localises to the cytoplasm. It carries out the reaction D-glyceraldehyde 3-phosphate = dihydroxyacetone phosphate. Its pathway is carbohydrate biosynthesis; gluconeogenesis. The protein operates within carbohydrate degradation; glycolysis; D-glyceraldehyde 3-phosphate from glycerone phosphate: step 1/1. In terms of biological role, involved in the gluconeogenesis. Catalyzes stereospecifically the conversion of dihydroxyacetone phosphate (DHAP) to D-glyceraldehyde-3-phosphate (G3P). This is Triosephosphate isomerase from Helicobacter acinonychis (strain Sheeba).